Here is a 418-residue protein sequence, read N- to C-terminus: Gamma-glutamyl phosphate reductase (418 aa).

This sequence belongs to the gamma-glutamyl phosphate reductase family.

It localises to the cytoplasm. It carries out the reaction L-glutamate 5-semialdehyde + phosphate + NADP(+) = L-glutamyl 5-phosphate + NADPH + H(+). It functions in the pathway amino-acid biosynthesis; L-proline biosynthesis; L-glutamate 5-semialdehyde from L-glutamate: step 2/2. Functionally, catalyzes the NADPH-dependent reduction of L-glutamate 5-phosphate into L-glutamate 5-semialdehyde and phosphate. The product spontaneously undergoes cyclization to form 1-pyrroline-5-carboxylate. This is Gamma-glutamyl phosphate reductase from Chlorobium limicola (strain DSM 245 / NBRC 103803 / 6330).